Here is an 870-residue protein sequence, read N- to C-terminus: LPS-assembly protein LptD (870 aa).

The first 25 residues, 1 to 25, serve as a signal peptide directing secretion; the sequence is MKQGKSFIFYCLVLLLCGFQQLSSA.

It belongs to the LptD family. As to quaternary structure, component of the lipopolysaccharide transport and assembly complex. Interacts with LptE and LptA.

It localises to the cell outer membrane. Its function is as follows. Together with LptE, is involved in the assembly of lipopolysaccharide (LPS) at the surface of the outer membrane. The chain is LPS-assembly protein LptD from Coxiella burnetii (strain RSA 493 / Nine Mile phase I).